We begin with the raw amino-acid sequence, 175 residues long: Large ribosomal subunit protein uL10 (175 aa).

Belongs to the universal ribosomal protein uL10 family. As to quaternary structure, part of the ribosomal stalk of the 50S ribosomal subunit. The N-terminus interacts with L11 and the large rRNA to form the base of the stalk. The C-terminus forms an elongated spine to which L12 dimers bind in a sequential fashion forming a multimeric L10(L12)X complex.

Forms part of the ribosomal stalk, playing a central role in the interaction of the ribosome with GTP-bound translation factors. The sequence is that of Large ribosomal subunit protein uL10 from Prochlorococcus marinus (strain MIT 9515).